Reading from the N-terminus, the 215-residue chain is Sodium channel regulatory subunit beta-2 (215 aa).

The first 29 residues, 1 to 29 (MHRDAWLPRPAFSLTGLSLFFSLVPPGRS), serve as a signal peptide directing secretion. The Extracellular segment spans residues 30–157 (MEVTVPATLN…XEEPPERDST (128 aa)). Residues 32 to 154 (VTVPATLNVL…QVLXEEPPER (123 aa)) enclose the Ig-like C2-type domain. 3 N-linked (GlcNAc...) asparagine glycosylation sites follow: Asn42, Asn66, and Asn74. Intrachain disulfides connect Cys50–Cys127 and Cys72–Cys75. The chain crosses the membrane as a helical span at residues 158–179 (VAVIVGASVGGFLAVVILVLMV). The Cytoplasmic portion of the chain corresponds to 180 to 215 (VKCVRRKKEQKLSTDDLKTEEEGKTDGEGNPDDGAK). A disordered region spans residues 187–215 (KEQKLSTDDLKTEEEGKTDGEGNPDDGAK). Over residues 189 to 215 (QKLSTDDLKTEEEGKTDGEGNPDDGAK) the composition is skewed to basic and acidic residues. Position 192 is a phosphoserine (Ser192). Residue Thr204 is modified to Phosphothreonine.

This sequence belongs to the sodium channel auxiliary subunit SCN2B (TC 8.A.17) family. In terms of assembly, a voltage-gated sodium (Nav) channel consists of an ion-conducting pore-forming alpha subunit functional on its own that is regulated by one or more beta subunits. The beta subunit SCN2B is disulfide-linked to the pore-forming alpha subunit. Interacts with SCN1A; regulatory subunit of SCN1A/Nav1.1. Interacts with SCN2A; regulatory subunit of SCN2A/Nav1.2. Interacts with SCN3A; regulatory subunit of SCN3A/Nav1.3. Interacts with SCN5A; regulatory subunit of SCN5A/Nav1.5. Interacts with SCN8A; regulatory subunit of SCN8A/Nav1.6. Interacts with SCN9A; regulatory subunit of SCN9A/Nav1.7. Interacts with SCN10A; regulatory subunit of SCN10A/Nav1.8. Interacts with TNR; may play a crucial role in clustering and regulation of activity of SCN2B-containing Nav channels at nodes of Ranvier.

It is found in the cell membrane. It localises to the cell projection. The protein localises to the axon. Its function is as follows. Regulatory subunit of multiple voltage-gated sodium (Nav) channels, that directly mediate the depolarization of excitable membranes. Navs, also called VGSCs (voltage-gated sodium channels) or VDSCs (voltage-dependent sodium channels), operate by switching between closed and open conformations depending on the voltage difference across the membrane. In the open conformation they allow Na(+) ions to selectively pass through the pore, along their electrochemical gradient. The influx of Na+ ions provokes membrane depolarization, initiating the propagation of electrical signals throughout cells and tissues. The accessory beta subunits participate in localization and functional modulation of the Nav channels. Modulates the activity of SCN1A/Nav1.1, SCN2A/Nav1.2, SCN2A/Nav1.3, SCN5A/Nav1.5, SCN8A/Nav1.6, SCN9A/Nav1.7 and SCN10A/Nav1.8. The sequence is that of Sodium channel regulatory subunit beta-2 from Canis lupus familiaris (Dog).